Reading from the N-terminus, the 24-residue chain is Large ribosomal subunit protein uL10 (24 aa).

This sequence belongs to the universal ribosomal protein uL10 family. As to quaternary structure, part of the ribosomal stalk of the 50S ribosomal subunit. The N-terminus interacts with L11 and the large rRNA to form the base of the stalk. The C-terminus forms an elongated spine to which L12 dimers bind in a sequential fashion forming a multimeric L10(L12)X complex.

In terms of biological role, forms part of the ribosomal stalk, playing a central role in the interaction of the ribosome with GTP-bound translation factors. This Enterobacter cloacae protein is Large ribosomal subunit protein uL10 (rplJ).